The following is an 81-amino-acid chain: Putative defensin-like protein 148 (81 aa).

Residues 1–24 (MIKSFQLSFTVLIVFTVLILGVVG) form the signal peptide. 4 cysteine pairs are disulfide-bonded: cysteine 34–cysteine 80, cysteine 43–cysteine 63, cysteine 48–cysteine 74, and cysteine 52–cysteine 76.

Belongs to the DEFL family.

Its subcellular location is the secreted. This Arabidopsis thaliana (Mouse-ear cress) protein is Putative defensin-like protein 148 (LCR4).